The primary structure comprises 417 residues: Phosphoglycerate kinase (417 aa).

(2R)-3-phosphoglycerate contacts are provided by valine 23, aspartate 24, phenylalanine 25, asparagine 26, glutamine 39, arginine 40, serine 63, histidine 64, glycine 66, arginine 67, leucine 122, arginine 123, histidine 170, and arginine 171. Residue glycine 214 coordinates ADP. CDP is bound at residue glycine 214. AMP-binding residues include alanine 215 and lysine 216. Residue alanine 215 coordinates ATP. A Mg(2+)-binding site is contributed by alanine 215. Aspartate 219 serves as a coordination point for CDP. Aspartate 219 provides a ligand contact to Mg(2+). Lysine 220 is a binding site for AMP. Position 220 (lysine 220) interacts with ATP. Glycine 238 is an ADP binding site. Residue glycine 238 participates in CDP binding. Positions 239 and 313 each coordinate AMP. Glycine 239 and glycine 313 together coordinate ATP. Glycine 338 and phenylalanine 343 together coordinate CDP. Residue phenylalanine 343 coordinates ADP. AMP is bound at residue glutamate 344. ATP is bound by residues glutamate 344, aspartate 375, and threonine 376. Mg(2+) is bound at residue aspartate 375.

Belongs to the phosphoglycerate kinase family. In terms of assembly, monomer. The cofactor is Mg(2+).

It localises to the cytoplasm. It is found in the mitochondrion. It carries out the reaction (2R)-3-phosphoglycerate + ATP = (2R)-3-phospho-glyceroyl phosphate + ADP. It participates in carbohydrate degradation; glycolysis; pyruvate from D-glyceraldehyde 3-phosphate: step 2/5. Catalyzes one of the two ATP producing reactions in the glycolytic pathway via the reversible conversion of 1,3-diphosphoglycerate to 3-phosphoglycerate. Both L- and D- forms of purine and pyrimidine nucleotides can be used as substrates, but the activity is much lower on pyrimidines. Negatively regulates the biosynthesis of acetyl-CoA from pyruvate in the mitochondrion. This is Phosphoglycerate kinase (PGKA) from Penicillium citrinum.